Here is a 464-residue protein sequence, read N- to C-terminus: MLAARRLLGGSLPSRVSVRFSGDTTAPKKTSFGSLKDEDRIFTNLYGRHDWRLKGALSRGDWYKTKEILLKGPDWILGEIKTSGLRGRGGAGFPTGLKWSFMNKPSDGRPKYLVVNADEGEPGTCKDREIIRHDPHKLVEGCLVGGRAMGARAAYIYIRGEFYNEASNLQVAIREAYEAGLIGKNACGSGYDFDVFVVRGAGAYICGEETALIESIEGKQGKPRLKPPFPADVGVFGCPTTVANVETVAVSPTICRRGGTWFAGFGRERNSGTKLFNISGHVNHPCTVEEEMSVPLKELIEKHAGGVTGGWDNLLAVIPGGSSTPLIPKSVCETVLMDFDALVQAQTGLGTAAVIVMDRSTDIVKAIARLIEFYKYESCGQCTPCREGVDWMNKVMARFVRGDARPAEIDSLWEISKQIEGHTICALGDGAAWPVQGLIRHFRPELEERMQRFAQQHQARQAAS.

Residues 1 to 20 (MLAARRLLGGSLPSRVSVRF) constitute a mitochondrion transit peptide. K81 bears the N6-acetyllysine; alternate mark. K81 bears the N6-succinyllysine; alternate mark. Residue 87-96 (GRGGAGFPTG) participates in NADH binding. K104 carries the post-translational modification N6-acetyllysine. 199 to 247 (RGAGAYICGEETALIESIEGKQGKPRLKPPFPADVGVFGCPTTVANVET) provides a ligand contact to FMN. At R257 the chain carries Omega-N-methylarginine. K375 bears the N6-acetyllysine mark. Residues C379, C382, C385, and C425 each coordinate [4Fe-4S] cluster.

Belongs to the complex I 51 kDa subunit family. Core subunit of respiratory chain NADH dehydrogenase (Complex I) which is composed of 45 different subunits. This is a component of the flavoprotein-sulfur (FP) fragment of the enzyme. Interacts with RAB5IF. FMN serves as cofactor. Requires [4Fe-4S] cluster as cofactor.

Its subcellular location is the mitochondrion inner membrane. It catalyses the reaction a ubiquinone + NADH + 5 H(+)(in) = a ubiquinol + NAD(+) + 4 H(+)(out). Core subunit of the mitochondrial membrane respiratory chain NADH dehydrogenase (Complex I) which catalyzes electron transfer from NADH through the respiratory chain, using ubiquinone as an electron acceptor. Part of the peripheral arm of the enzyme, where the electrons from NADH are accepted by flavin mononucleotide (FMN) and then passed along a chain of iron-sulfur clusters by electron tunnelling to the final acceptor ubiquinone. Contains FMN, which is the initial electron acceptor as well as one iron-sulfur cluster. This is NADH dehydrogenase [ubiquinone] flavoprotein 1, mitochondrial from Macaca fascicularis (Crab-eating macaque).